The sequence spans 306 residues: UDP-3-O-acyl-N-acetylglucosamine deacetylase (306 aa).

Zn(2+)-binding residues include histidine 79, histidine 239, and aspartate 243. Histidine 266 (proton donor) is an active-site residue.

The protein belongs to the LpxC family. Zn(2+) is required as a cofactor.

It carries out the reaction a UDP-3-O-[(3R)-3-hydroxyacyl]-N-acetyl-alpha-D-glucosamine + H2O = a UDP-3-O-[(3R)-3-hydroxyacyl]-alpha-D-glucosamine + acetate. Its pathway is glycolipid biosynthesis; lipid IV(A) biosynthesis; lipid IV(A) from (3R)-3-hydroxytetradecanoyl-[acyl-carrier-protein] and UDP-N-acetyl-alpha-D-glucosamine: step 2/6. Its function is as follows. Catalyzes the hydrolysis of UDP-3-O-myristoyl-N-acetylglucosamine to form UDP-3-O-myristoylglucosamine and acetate, the committed step in lipid A biosynthesis. The chain is UDP-3-O-acyl-N-acetylglucosamine deacetylase from Glaesserella parasuis serovar 5 (strain SH0165) (Haemophilus parasuis).